We begin with the raw amino-acid sequence, 66 residues long: Stress-associated endoplasmic reticulum protein 1 (66 aa).

Residues 1-33 (MVAKQRIRMANEKHSKNITQRGNVAKTSRNAPG) form a disordered region. Residues 1–38 (MVAKQRIRMANEKHSKNITQRGNVAKTSRNAPGEKASV) are Cytoplasmic-facing. Residues 17–30 (NITQRGNVAKTSRN) show a composition bias toward polar residues. The helical transmembrane segment at 39–59 (GPWLLALFIFVVCGSAIFQII) threads the bilayer. The Extracellular segment spans residues 60-66 (QSIRMGM).

It belongs to the RAMP4 family. In terms of assembly, interacts with SEC61B, SEC61A1 and the SEC61 complex. Interacts with CANX.

The protein resides in the membrane. It is found in the endoplasmic reticulum membrane. In terms of biological role, interacts with target proteins during their translocation into the lumen of the endoplasmic reticulum. Protects unfolded target proteins against degradation during ER stress. May facilitate glycosylation of target proteins after termination of ER stress. May modulate the use of N-glycosylation sites on target proteins. This Pongo abelii (Sumatran orangutan) protein is Stress-associated endoplasmic reticulum protein 1 (SERP1).